Consider the following 64-residue polypeptide: Putative calcium channel toxin Tx758 (64 aa).

An N-terminal signal peptide occupies residues Met1–Ala18. A propeptide spanning residues Glu19–Arg27 is cleaved from the precursor. Disulfide bonds link Cys29–Cys43, Cys36–Cys49, and Cys42–Cys58.

It belongs to the scorpion calcin-like family. In terms of tissue distribution, expressed by the venom gland.

It localises to the secreted. May increase intracellular calcium release through the activation of nuclear inositol 1,4,5-trisphosphate receptors (ITPR) of cardiomyocytes, thereby causing an increase in the contraction frequency of these cells. This chain is Putative calcium channel toxin Tx758, found in Buthus israelis (Israeli scorpion).